Consider the following 975-residue polypeptide: Glycine dehydrogenase (decarboxylating) (975 aa).

Position 723 is an N6-(pyridoxal phosphate)lysine (Lys-723).

The protein belongs to the GcvP family. In terms of assembly, the glycine cleavage system is composed of four proteins: P, T, L and H. Requires pyridoxal 5'-phosphate as cofactor.

It carries out the reaction N(6)-[(R)-lipoyl]-L-lysyl-[glycine-cleavage complex H protein] + glycine + H(+) = N(6)-[(R)-S(8)-aminomethyldihydrolipoyl]-L-lysyl-[glycine-cleavage complex H protein] + CO2. Its function is as follows. The glycine cleavage system catalyzes the degradation of glycine. The P protein binds the alpha-amino group of glycine through its pyridoxal phosphate cofactor; CO(2) is released and the remaining methylamine moiety is then transferred to the lipoamide cofactor of the H protein. In Burkholderia lata (strain ATCC 17760 / DSM 23089 / LMG 22485 / NCIMB 9086 / R18194 / 383), this protein is Glycine dehydrogenase (decarboxylating).